The sequence spans 373 residues: MSHNTFGHLFRVTTFGESHGPAIGCVVDGCPPLIPIDEADIQTFLDLRRPGTSRFTTQRQEADRVRILSGVFTDEASGKQVSTGTPIALLIENTDQRSKDYDAIKNLYRPGHADFAYDAKYGLRDHRGGGRSSARETATRVAAGAIARKVVADVTIRGALVQMGPHKINRDAWDWDETTRNPFFCPDAKAAAFFETYLDDIRKAGSSIGAVIEIVAENVPAGWGAPLYGKLDADLASGLMSINAVKGVEIGEGFDAAALSGEANADEMRIGSLGEPVFLSNHAGGILGGISTGQPLVMRFAVKPTSSILQPRHTIDRSGHESEIVTKGRHDPCVGIRAVPVGEAMVACVLADHFLRHRGQIGEGAVWPANRSR.

Residues R48 and R54 each coordinate NADP(+). FMN contacts are provided by residues 131 to 133 (RSS), 243 to 244 (NA), G288, 303 to 307 (KPTSS), and R329.

It belongs to the chorismate synthase family. In terms of assembly, homotetramer. It depends on FMNH2 as a cofactor.

It catalyses the reaction 5-O-(1-carboxyvinyl)-3-phosphoshikimate = chorismate + phosphate. It functions in the pathway metabolic intermediate biosynthesis; chorismate biosynthesis; chorismate from D-erythrose 4-phosphate and phosphoenolpyruvate: step 7/7. Catalyzes the anti-1,4-elimination of the C-3 phosphate and the C-6 proR hydrogen from 5-enolpyruvylshikimate-3-phosphate (EPSP) to yield chorismate, which is the branch point compound that serves as the starting substrate for the three terminal pathways of aromatic amino acid biosynthesis. This reaction introduces a second double bond into the aromatic ring system. This is Chorismate synthase from Beijerinckia indica subsp. indica (strain ATCC 9039 / DSM 1715 / NCIMB 8712).